Reading from the N-terminus, the 76-residue chain is DNA-directed RNA polymerase subunit epsilon (76 aa).

Belongs to the RNA polymerase subunit epsilon family. In terms of assembly, RNAP is composed of a core of 2 alpha, a beta and a beta' subunit. The core is associated with a delta subunit, and at least one of epsilon or omega. When a sigma factor is associated with the core the holoenzyme is formed, which can initiate transcription.

It carries out the reaction RNA(n) + a ribonucleoside 5'-triphosphate = RNA(n+1) + diphosphate. A non-essential component of RNA polymerase (RNAP). In Streptococcus pyogenes serotype M1, this protein is DNA-directed RNA polymerase subunit epsilon.